A 178-amino-acid chain; its full sequence is Large ribosomal subunit protein uL5 (178 aa).

This sequence belongs to the universal ribosomal protein uL5 family. As to quaternary structure, part of the 50S ribosomal subunit; part of the 5S rRNA/L5/L18/L25 subcomplex. Contacts the 5S rRNA and the P site tRNA. Forms a bridge to the 30S subunit in the 70S ribosome.

This is one of the proteins that bind and probably mediate the attachment of the 5S RNA into the large ribosomal subunit, where it forms part of the central protuberance. In the 70S ribosome it contacts protein S13 of the 30S subunit (bridge B1b), connecting the 2 subunits; this bridge is implicated in subunit movement. Contacts the P site tRNA; the 5S rRNA and some of its associated proteins might help stabilize positioning of ribosome-bound tRNAs. In Wigglesworthia glossinidia brevipalpis, this protein is Large ribosomal subunit protein uL5.